The chain runs to 334 residues: Nucleoid-associated protein YpsIP31758_2721 (334 aa).

Belongs to the YejK family.

It localises to the cytoplasm. The protein resides in the nucleoid. This Yersinia pseudotuberculosis serotype O:1b (strain IP 31758) protein is Nucleoid-associated protein YpsIP31758_2721.